We begin with the raw amino-acid sequence, 594 residues long: KIF-binding protein (594 aa).

Belongs to the KIF-binding protein family.

The protein resides in the cytoplasm. It localises to the cytoskeleton. Its function is as follows. Activator of KIF1B plus-end-directed microtubule motor activity. Required for organization of axonal microtubules, and axonal outgrowth and maintenance during peripheral and central nervous system development. The protein is KIF-binding protein (Kifbp) of Gallus gallus (Chicken).